Reading from the N-terminus, the 73-residue chain is DNA-binding protein S1FA3 (73 aa).

The short motif at 47–52 (PPRKKK) is the Nuclear localization signal element. Positions 47-63 (PPRKKKPVSKKKMKKEK) are enriched in basic residues. The segment at 47-73 (PPRKKKPVSKKKMKKEKMKQGVQVPGE) is disordered.

Belongs to the S1FA transcription factor family.

The protein localises to the nucleus. Functionally, DNA-binding protein that specifically recognizes a negative element (S1F) within the RPS1 promoter. This is DNA-binding protein S1FA3 (S1FA3) from Arabidopsis thaliana (Mouse-ear cress).